We begin with the raw amino-acid sequence, 580 residues long: Xylulose kinase (580 aa).

The substrate site is built by histidine 99, arginine 170, aspartate 280, and asparagine 281. Residues tryptophan 355, 441–442 (GA), and asparagine 445 each bind ATP.

Belongs to the FGGY kinase family. As to quaternary structure, monomer.

It catalyses the reaction D-xylulose + ATP = D-xylulose 5-phosphate + ADP + H(+). Its function is as follows. Phosphorylates D-xylulose to produce D-xylulose 5-phosphate, a molecule that may play an important role in the regulation of glucose metabolism and lipogenesis. The protein is Xylulose kinase (XYLB) of Pongo abelii (Sumatran orangutan).